Here is a 117-residue protein sequence, read N- to C-terminus: Transcription elongation factor SPT4 (117 aa).

Residues Met-1–Leu-40 are interaction with SUPT5H. The C4-type zinc finger occupies Cys-16–Cys-36.

The protein belongs to the SPT4 family. Interacts with SUPT5H to form the DSIF complex. DSIF interacts with RNA polymerase II and with the positive transcription elongation factor b complex (P-TEFb complex), which is composed of CDK9 and cyclin-T.

It localises to the nucleus. May function as a component of the DRB sensitivity-inducing factor complex (DSIF complex), which regulates transcription elongation by RNA polymerase II. Probably enhances transcriptional pausing at sites proximal to the promoter, which may facilitate the assembly of an elongation competent RNA polymerase II complex. Also acts to stimulate transcriptional elongation at low nucleotide concentrations. Regulation of transcriptional elongation by this protein is required for the expression of genes which control neuronal development. The polypeptide is Transcription elongation factor SPT4 (supt4h1) (Danio rerio (Zebrafish)).